The following is a 238-amino-acid chain: MIINAKGPASFAEKYIVRSIWDNKFPPGSILPAERELSELIGVTRTTLREVLQRLARDGWLKIQHGKPTRVNNFWETSGLNILETIADLNPEGFPVLVDQLLSARTNVSAIYFRGALRYNPDTAVDVLAKIHQLEDTAESYAEFDYLLHHTLAFSSGNPLYVLILNGFKGLYSRVGRYYFTSSDARLLALNFYKELELLAQAKNYLDVPALMRTYGMNSGKMWLQLRDDMPASIAQDN.

Residues 6 to 74 (KGPASFAEKY…HGKPTRVNNF (69 aa)) form the HTH gntR-type domain. The H-T-H motif DNA-binding region spans 34 to 53 (ERELSELIGVTRTTLREVLQ).

In terms of assembly, homodimer.

Its subcellular location is the cytoplasm. In terms of biological role, multifunctional regulator of fatty acid metabolism. In Shewanella baltica (strain OS185), this protein is Fatty acid metabolism regulator protein.